Reading from the N-terminus, the 605-residue chain is Elongation factor 4 (605 aa).

The 183-residue stretch at 4–186 (SSVRNFCIIA…AIVNKVPAPK (183 aa)) folds into the tr-type G domain. GTP contacts are provided by residues 16–21 (DHGKST) and 133–136 (NKID).

It belongs to the TRAFAC class translation factor GTPase superfamily. Classic translation factor GTPase family. LepA subfamily.

The protein localises to the cell membrane. It catalyses the reaction GTP + H2O = GDP + phosphate + H(+). In terms of biological role, required for accurate and efficient protein synthesis under certain stress conditions. May act as a fidelity factor of the translation reaction, by catalyzing a one-codon backward translocation of tRNAs on improperly translocated ribosomes. Back-translocation proceeds from a post-translocation (POST) complex to a pre-translocation (PRE) complex, thus giving elongation factor G a second chance to translocate the tRNAs correctly. Binds to ribosomes in a GTP-dependent manner. This is Elongation factor 4 from Dehalococcoides mccartyi (strain ATCC BAA-2100 / JCM 16839 / KCTC 5957 / BAV1).